Reading from the N-terminus, the 204-residue chain is Guanylate kinase (204 aa).

Residues 18–196 enclose the Guanylate kinase-like domain; sequence PKLFTISAPA…SYEVLKSIFI (179 aa). 25–32 is an ATP binding site; the sequence is APAGAGKT.

The protein belongs to the guanylate kinase family.

Its subcellular location is the cytoplasm. The enzyme catalyses GMP + ATP = GDP + ADP. Its function is as follows. Essential for recycling GMP and indirectly, cGMP. The protein is Guanylate kinase of Chlamydia abortus (strain DSM 27085 / S26/3) (Chlamydophila abortus).